Reading from the N-terminus, the 126-residue chain is Penton protein P31 (126 aa).

The protein resides in the virion. In terms of biological role, in association with P2 and trimeric P5, forms the spike complexes located at the 5-fold vertices of the capsid. Essential for viral infectivity. The protein is Penton protein P31 (XXXI) of Acinetobacter calcoaceticus (Arthrobacter siderocapsulatus).